The following is a 152-amino-acid chain: Type-1 angiotensin II receptor-associated protein (152 aa).

The Extracellular portion of the chain corresponds to 1 to 23 (MELPAVNLKVILLGHWLLTTWGC). A helical transmembrane segment spans residues 24–44 (IVFSGSYAWANFTILALGVWA). The Cytoplasmic segment spans residues 45 to 55 (VAQRDSIDAIS). A helical transmembrane segment spans residues 56–76 (MFLGGLLATIFLDIVHISIFY). Residues 77–86 (PRAGLTDTGR) lie on the Extracellular side of the membrane. Residues 87–107 (FGAGMAILSLLLKPLSCCFVY) form a helical membrane-spanning segment. Residues 108–152 (HMYRQRGGFLGSSQDRSAYQTIDSAEAPANAFAVPEGRGQDARGY) lie on the Cytoplasmic side of the membrane. A phosphoserine mark is found at serine 119 and serine 120. Threonine 128 bears the Phosphothreonine mark. Position 131 is a phosphoserine (serine 131).

As to quaternary structure, interacts with RACK1, and with the carboxy-terminal region of AGTR1.

The protein localises to the endoplasmic reticulum membrane. It is found in the golgi apparatus membrane. It localises to the cytoplasmic vesicle membrane. Functionally, appears to be a negative regulator of type-1 angiotensin II receptor-mediated signaling by regulating receptor internalization as well as mechanism of receptor desensitization such as phosphorylation. Also induces a decrease in cell proliferation and angiotensin II-stimulated transcriptional activity. In Pongo abelii (Sumatran orangutan), this protein is Type-1 angiotensin II receptor-associated protein (AGTRAP).